The primary structure comprises 93 residues: Small integral membrane protein 36 (93 aa).

Residues 14-34 (LIILVASYVILLLVFLVSCVL) traverse the membrane as a helical segment. Residues 70–93 (SHWARGPSLHLKDPAPLGKKSTVV) are disordered.

Its subcellular location is the membrane. The protein is Small integral membrane protein 36 of Mus musculus (Mouse).